A 1101-amino-acid chain; its full sequence is Coiled-coil domain-containing protein 150 (1101 aa).

Coiled-coil stretches lie at residues 106-299, 398-680, 712-940, and 970-1033; these read RLES…DLTS, AAHA…KEDN, DSEI…NYEQ, and VRNK…EAHR. Basic and acidic residues predominate over residues 1055–1071; that stretch reads SGEDRWQEKDQDVKHDV. A disordered region spans residues 1055-1101; that stretch reads SGEDRWQEKDQDVKHDVMSNQSVLHRWERKQNLRPMPKKYHSEVQRK.

The protein is Coiled-coil domain-containing protein 150 (CCDC150) of Homo sapiens (Human).